We begin with the raw amino-acid sequence, 186 residues long: Ribosome maturation factor RimM (186 aa).

The PRC barrel domain occupies 93 to 166 (PDEYYDHQLM…RAVIDPPPGL (74 aa)). A disordered region spans residues 160 to 186 (IDPPPGLIDDRAEVDSSDTEAATEADA). Over residues 174–186 (DSSDTEAATEADA) the composition is skewed to acidic residues.

The protein belongs to the RimM family. Binds ribosomal protein uS19.

It is found in the cytoplasm. Its function is as follows. An accessory protein needed during the final step in the assembly of 30S ribosomal subunit, possibly for assembly of the head region. Essential for efficient processing of 16S rRNA. May be needed both before and after RbfA during the maturation of 16S rRNA. It has affinity for free ribosomal 30S subunits but not for 70S ribosomes. The protein is Ribosome maturation factor RimM of Streptomyces avermitilis (strain ATCC 31267 / DSM 46492 / JCM 5070 / NBRC 14893 / NCIMB 12804 / NRRL 8165 / MA-4680).